A 122-amino-acid chain; its full sequence is Large ribosomal subunit protein uL14 (122 aa).

It belongs to the universal ribosomal protein uL14 family. Part of the 50S ribosomal subunit. Forms a cluster with proteins L3 and L19. In the 70S ribosome, L14 and L19 interact and together make contacts with the 16S rRNA in bridges B5 and B8.

Binds to 23S rRNA. Forms part of two intersubunit bridges in the 70S ribosome. The protein is Large ribosomal subunit protein uL14 of Lactobacillus delbrueckii subsp. bulgaricus (strain ATCC BAA-365 / Lb-18).